We begin with the raw amino-acid sequence, 421 residues long: Meiotic fizzy-related protein 1 (421 aa).

The interval 79-107 (DTPDRKSYSLSPISPQSQDMLRQPQKPKR) is disordered. Positions 86–98 (YSLSPISPQSQDM) are enriched in polar residues. WD repeat units lie at residues 123 to 160 (KNDF…VVQL), 164 to 203 (GATN…SVRS), 206 to 246 (GHSE…EMMK), 247 to 286 (VHEQ…PLHK), 289 to 331 (EHTA…LQNK), 333 to 374 (DTGS…NIAN), and 377 to 416 (AHTN…PKEE).

This sequence belongs to the WD repeat CDC20/Fizzy family. In terms of assembly, interacts with mes1.

It is found in the nucleus. Its function is as follows. Meiosis-specific activator of the anaphase promoting complex/cyclosome (APC/C). Involved in cdc13 degradation. This is Meiotic fizzy-related protein 1 (mfr1) from Schizosaccharomyces pombe (strain 972 / ATCC 24843) (Fission yeast).